Consider the following 118-residue polypeptide: DNA mimic protein DMP12 (118 aa).

The protein belongs to the DMP12-like protein family. In terms of assembly, monomer. Interacts with the dimeric form of the DNA-binding protein HU.

In terms of biological role, acts as a DNA mimic. Interacts with the DNA-binding protein HU and partially prevents the binding of HU protein to DNA by occupying the DNA binding sites on the protein. However, the relatively weak affinity of DMP12 for HU suggests that it may not completely block the HU protein-DNA binding, and that DMP12 is more likely to act as a regulator than a competitive inhibitor. It protects HU protein from limited digestion by trypsin in a limited trypsin digestion assay, suggesting that it may serve to protect the HU protein and improve the stability of unbound HU protein. This is DNA mimic protein DMP12 from Neisseria meningitidis serogroup B (strain ATCC BAA-335 / MC58).